Here is a 523-residue protein sequence, read N- to C-terminus: Cytochrome P450 CYP82J17 (523 aa).

The chain crosses the membrane as a helical span at residues 4–24 (FLSQPITIVLAILSVLLYNIW). C462 serves as a coordination point for heme.

It belongs to the cytochrome P450 family. As to expression, mainly expressed in leaves and seed pods and, to a lower extent, in flowers and stems.

It is found in the membrane. Its pathway is steroid metabolism; cholesterol metabolism. Its function is as follows. Involved in the biosynthesis of spiroketal steroid and saponin natural products from cholesterol such as diosgenin and analogs (e.g. furostanol and spirostanol), plant defense compounds used as main precursors for the industrial production of steroid hormones. During the 5,6-spiroketalization of cholesterol, may catalyze the 27-monohydroxylation of furostanol-type steroid to an intermediate product that undergoes a stereospecific formation of the terminal heterocycle to yield diosgenin. This chain is Cytochrome P450 CYP82J17, found in Trigonella foenum-graecum (Fenugreek).